The primary structure comprises 717 residues: DNA polymerase iota (717 aa).

Residues 1–22 (MEPLHAGAAGSSRAVCSQGPPT) are disordered. The UmuC domain occupies 30–243 (IVHVDLDCFY…NHIKEIPGIG (214 aa)). Residues Asp-34 and Leu-35 each contribute to the Mg(2+) site. Residues Tyr-39 and Arg-71 each contribute to the a 2'-deoxyribonucleoside 5'-triphosphate site. Asp-126 provides a ligand contact to Mg(2+). Glu-127 serves as the catalytic Proton acceptor. 2 DNA-binding regions span residues 300 to 307 (QSFSEEDT) and 343 to 360 (RLVIRRYSDKHCNRESRQ). A Ubiquitin-binding 1 (UBM1) motif is present at residues 500–517 (VDQEVFKQLPADIQEEIL). Disordered regions lie at residues 549 to 589 (QMQA…SHPS), 603 to 622 (KDEQTSQGPTESQGCQFSST), and 644 to 687 (HRTV…DIDP). Positions 575–589 (PGTSGLSPGSTSHPS) are enriched in low complexity. Composition is skewed to polar residues over residues 607–622 (TSQGPTESQGCQFSST) and 652–662 (QTATASHQGLE). The segment covering 665 to 679 (QGLESRELDSAEEKL) has biased composition (basic and acidic residues). The short motif at 685 to 702 (IDPQVFYELPEEVQKELM) is the Ubiquitin-binding 2 (UBM2) element.

The protein belongs to the DNA polymerase type-Y family. As to quaternary structure, interacts with POLH. Interacts with REV1. Interacts with ubiquitin. The cofactor is Mg(2+). Requires Mn(2+) as cofactor. Post-translationally, monoubiquitinated. Protein monoubiquitination prevents POLI binding to ubiquitin via the ubiquitin-binding motif 1 and ubiquitin-binding motif 2. Detected in testis, and at very low levels in spleen, lung and brain. Detected in round spermatids, but not in prophase spermatocytes.

It localises to the nucleus. The enzyme catalyses DNA(n) + a 2'-deoxyribonucleoside 5'-triphosphate = DNA(n+1) + diphosphate. Its function is as follows. Error-prone DNA polymerase specifically involved in DNA repair. Plays an important role in translesion synthesis, where the normal high-fidelity DNA polymerases cannot proceed and DNA synthesis stalls. Favors Hoogsteen base-pairing in the active site. Inserts the correct base with high-fidelity opposite an adenosine template. Exhibits low fidelity and efficiency opposite a thymidine template, where it will preferentially insert guanosine. May play a role in hypermutation of immunoglobulin genes. Forms a Schiff base with 5'-deoxyribose phosphate at abasic sites, but may not have lyase activity. The chain is DNA polymerase iota (Poli) from Mus musculus (Mouse).